The following is a 323-amino-acid chain: GDSL esterase/lipase At5g03980 (323 aa).

The signal sequence occupies residues 1–21 (MSTTKALSLLVFILFVSLVHS). Catalysis depends on Ser-36, which acts as the Nucleophile. Asn-77 carries N-linked (GlcNAc...) asparagine glycosylation. Active-site residues include Asp-294 and His-297.

The protein belongs to the 'GDSL' lipolytic enzyme family.

Its subcellular location is the secreted. This is GDSL esterase/lipase At5g03980 from Arabidopsis thaliana (Mouse-ear cress).